Consider the following 61-residue polypeptide: MAKKSMIAKAQRKPKFQVRAYTRCRICGRPHSVYRDFGLCRVCLRKMASEGLIPGLRKASW.

Zn(2+) contacts are provided by Cys-24, Cys-27, Cys-40, and Cys-43.

The protein belongs to the universal ribosomal protein uS14 family. Zinc-binding uS14 subfamily. In terms of assembly, part of the 30S ribosomal subunit. Contacts proteins S3 and S10. Requires Zn(2+) as cofactor.

Binds 16S rRNA, required for the assembly of 30S particles and may also be responsible for determining the conformation of the 16S rRNA at the A site. The sequence is that of Small ribosomal subunit protein uS14 from Helicobacter pylori (strain J99 / ATCC 700824) (Campylobacter pylori J99).